A 539-amino-acid polypeptide reads, in one-letter code: Glucose-6-phosphate isomerase (539 aa).

The Proton donor role is filled by glutamate 349. Residues histidine 380 and lysine 508 contribute to the active site.

The protein belongs to the GPI family.

The protein localises to the cytoplasm. It carries out the reaction alpha-D-glucose 6-phosphate = beta-D-fructose 6-phosphate. It functions in the pathway carbohydrate biosynthesis; gluconeogenesis. Its pathway is carbohydrate degradation; glycolysis; D-glyceraldehyde 3-phosphate and glycerone phosphate from D-glucose: step 2/4. In terms of biological role, catalyzes the reversible isomerization of glucose-6-phosphate to fructose-6-phosphate. The sequence is that of Glucose-6-phosphate isomerase from Caulobacter sp. (strain K31).